The following is a 469-amino-acid chain: ABHD16B (469 aa).

The AB hydrolase-1 domain occupies 174–298; it reads VICCEGNAGF…GLVVRTVREH (125 aa). Residues Ser247, Asp322, and His418 each act as charge relay system in the active site.

This sequence belongs to the AB hydrolase superfamily. ABHD16 family.

It catalyses the reaction a 1,2-diacyl-sn-glycero-3-phospho-L-serine + H2O = a 2-acyl-sn-glycero-3-phospho-L-serine + a fatty acid + H(+). The catalysed reaction is a 1-acylglycerol + H2O = glycerol + a fatty acid + H(+). The enzyme catalyses 1-(9Z-octadecenoyl)-glycerol + H2O = glycerol + (9Z)-octadecenoate + H(+). Hydrolyzes the sn-1 position of glycerophospholipids with high specificity towards phosphatidylserine (PS), PS-PLA1 enzyme. Also hydrolyzes the acyl chain of glycerolipids with a preference for the monoacylglycerol (MAG) 1-acylglycerol, MAG lipase. Plays a regulatory role in cellular lipid homeostasis by modulating genes involved in neutral lipid degradation and in phospholipid synthesis and composition. The polypeptide is ABHD16B (Homo sapiens (Human)).